Consider the following 327-residue polypeptide: COP9 signalosome complex subunit 6 (327 aa).

One can recognise an MPN domain in the interval Val41 to Ile174. The interval Ser211–Phe327 is interaction with Vpr.

It belongs to the peptidase M67A family. CSN6 subfamily. Component of the CSN complex, composed of COPS1/GPS1, COPS2, COPS3, COPS4, COPS5, COPS6, COPS7 (COPS7A or COPS7B), COPS8 and COPS9 isoform 1. In the complex, it probably interacts directly with COPS2, COPS4, COPS5, COPS7 (COPS7A or COPS7B) and COPS9 isoform 1. Interacts with the translation initiation factor EIF3S6. Interacts weakly with RBX1. Directly interacts with COP1 and 14-3-3 protein sigma/SFN. Interacts with ERCC6. As to quaternary structure, (Microbial infection) Interacts with the HIV-1 protein Vpr. Widely expressed.

It localises to the nucleus. Its subcellular location is the cytoplasm. The protein localises to the perinuclear region. Its function is as follows. Component of the COP9 signalosome complex (CSN), a complex involved in various cellular and developmental processes. The CSN complex is an essential regulator of the ubiquitin (Ubl) conjugation pathway by mediating the deneddylation of the cullin subunits of SCF-type E3 ligase complexes, leading to decrease the Ubl ligase activity of SCF-type complexes such as SCF, CSA or DDB2. The complex is also involved in phosphorylation of p53/TP53, c-jun/JUN, IkappaBalpha/NFKBIA, ITPK1 and IRF8, possibly via its association with CK2 and PKD kinases. CSN-dependent phosphorylation of TP53 and JUN promotes and protects degradation by the Ubl system, respectively. Has some glucocorticoid receptor-responsive activity. Stabilizes COP1 through reducing COP1 auto-ubiquitination and decelerating COP1 turnover rate, hence regulates the ubiquitination of COP1 targets. The sequence is that of COP9 signalosome complex subunit 6 (COPS6) from Homo sapiens (Human).